Consider the following 832-residue polypeptide: Protein PPP4R3C (832 aa).

Residues 708 to 832 (RTQEGEAVMP…SPKKKPHLSS (125 aa)) are disordered. Composition is skewed to basic and acidic residues over residues 725-735 (FTETKRTHQEG) and 749-765 (METK…DSPK). The span at 769-779 (SGDFKFSSSYS) shows a compositional bias: low complexity. Residues 801 to 820 (PDDEEEKEEDEEEKEEDKED) are compositionally biased toward acidic residues.

Belongs to the SMEK family.

This Homo sapiens (Human) protein is Protein PPP4R3C.